The chain runs to 138 residues: Acidic phospholipase A2 DsM-a2/DsM-a2' (138 aa).

The signal sequence occupies residues 1–16 (MRTLWIVAVCLIGVEG). 7 disulfide bridges follow: cysteine 42/cysteine 131, cysteine 44/cysteine 60, cysteine 59/cysteine 111, cysteine 65/cysteine 138, cysteine 66/cysteine 104, cysteine 73/cysteine 97, and cysteine 91/cysteine 102. Positions 43, 45, and 47 each coordinate Ca(2+). The active site involves histidine 63. Aspartate 64 is a Ca(2+) binding site. Aspartate 105 is a catalytic residue.

This sequence belongs to the phospholipase A2 family. Group II subfamily. D49 sub-subfamily. Ca(2+) serves as cofactor. Expressed by the venom gland.

It localises to the secreted. The catalysed reaction is a 1,2-diacyl-sn-glycero-3-phosphocholine + H2O = a 1-acyl-sn-glycero-3-phosphocholine + a fatty acid + H(+). In terms of biological role, exhibits high hydrolytic activities and shows strong preference for the anionic micelles (dPPC with deoxycholate) to the zwitterionic micelles (dPPC with Triton X-100). PLA2 catalyzes the calcium-dependent hydrolysis of the 2-acyl groups in 3-sn-phosphoglycerides. The sequence is that of Acidic phospholipase A2 DsM-a2/DsM-a2' from Daboia siamensis (Eastern Russel's viper).